Consider the following 748-residue polypeptide: Cytosolic phospholipase A2 (748 aa).

The tract at residues 1 to 178 (MSFIDPYQHI…MRKLLGPKKS (178 aa)) is phospholipid binding. At S2 the chain carries Phosphoserine. The C2 domain maps to 6-122 (PYQHIIVEHQ…KVGEKKEVPF (117 aa)). Residues D40, T41, D43, N65, D93, A94, and N95 each coordinate Ca(2+). Positions 138 to 739 (VCSSPDLRFS…SNVEARRFFN (602 aa)) constitute a PLA2c domain. The active-site Nucleophile is the S228. Phosphothreonine is present on T268. A disordered region spans residues 428–458 (HIVSNDSSDSDDESQEPKGTEGEDAEREYQN). Phosphoserine occurs at positions 434, 435, and 437. The segment covering 442–458 (QEPKGTEGEDAEREYQN) has biased composition (basic and acidic residues). S505 carries the post-translational modification Phosphoserine; by MAPK. Position 514 is a phosphoserine (S514). K540 participates in a covalent cross-link: Glycyl lysine isopeptide (Lys-Gly) (interchain with G-Cter in SUMO2). The active-site Proton acceptor is the D548. K605 participates in a covalent cross-link: Glycyl lysine isopeptide (Lys-Gly) (interchain with G-Cter in SUMO2). A phosphoserine mark is found at S726 and S728.

Interacts with KAT5. In terms of processing, phosphorylated at both Ser-505 and Ser-726 in response to mitogenic stimuli.

The protein resides in the cytoplasm. It localises to the golgi apparatus membrane. Its subcellular location is the nucleus envelope. The enzyme catalyses a 1,2-diacyl-sn-glycero-3-phosphocholine + H2O = a 1-acyl-sn-glycero-3-phosphocholine + a fatty acid + H(+). It carries out the reaction a 1-O-alkyl-2-acyl-sn-glycero-3-phosphocholine + H2O = a 1-O-alkyl-sn-glycero-3-phosphocholine + a fatty acid + H(+). The catalysed reaction is a 1-acyl-sn-glycero-3-phosphocholine + H2O = sn-glycerol 3-phosphocholine + a fatty acid + H(+). It catalyses the reaction 1-hexadecanoyl-2-(5Z,8Z,11Z,14Z-eicosatetraenoyl)-sn-glycero-3-phosphocholine + H2O = 1-hexadecanoyl-sn-glycero-3-phosphocholine + (5Z,8Z,11Z,14Z)-eicosatetraenoate + H(+). The enzyme catalyses 1,2-di-(5Z,8Z,11Z,14Z-eicosatetraenoyl)-sn-glycero-3-phosphocholine + H2O = 1-(5Z,8Z,11Z,14Z-eicosatetraenoyl)-sn-glycero-3-phosphocholine + (5Z,8Z,11Z,14Z)-eicosatetraenoate + H(+). It carries out the reaction 1-octadecanoyl-2-(5Z,8Z,11Z,14Z-eicosatetraenoyl)-sn-glycero-3-phosphocholine + H2O = 1-octadecanoyl-sn-glycero-3-phosphocholine + (5Z,8Z,11Z,14Z)-eicosatetraenoate + H(+). The catalysed reaction is 1-hexadecanoyl-2-(9Z,12Z-octadecadienoyl)-sn-glycero-3-phosphocholine + H2O = (9Z,12Z)-octadecadienoate + 1-hexadecanoyl-sn-glycero-3-phosphocholine + H(+). It catalyses the reaction 1-octadecanoyl-2-(9Z,12Z,15Z-octadecatrienoyl)-sn-glycero-3-phosphocholine + H2O = (9Z,12Z,15Z)-octadecatrienoate + 1-octadecanoyl-sn-glycero-3-phosphocholine + H(+). The enzyme catalyses 1-(5Z,8Z,11Z,14Z-eicosatetraenoyl)-2-hexadecanoyl-sn-glycero-3-phosphocholine + H2O = 1-(5Z,8Z,11Z,14Z-eicosatetraenoyl)-sn-glycero-3-phosphocholine + hexadecanoate + H(+). It carries out the reaction 1-O-hexadecyl-2-(5Z,8Z,11Z,14Z)-eicosatetraenoyl-sn-glycero-3-phosphocholine + H2O = 1-O-hexadecyl-sn-glycero-3-phosphocholine + (5Z,8Z,11Z,14Z)-eicosatetraenoate + H(+). The catalysed reaction is 1,2-di-(9Z-octadecenoyl)-sn-glycero-3-phospho-(1'-sn-glycerol) + H2O = 1-(9Z-octadecenoyl)-sn-glycero-3-phospho-(1'-sn-glycerol) + (9Z)-octadecenoate + H(+). It catalyses the reaction 1-octadecanoyl-2-(5Z,8Z,11Z,14Z-eicosatetraenoyl)-sn-glycero-3-phosphate + H2O = 1-octadecanoyl-sn-glycero-3-phosphate + (5Z,8Z,11Z,14Z)-eicosatetraenoate + H(+). The enzyme catalyses 1-hexadecanoyl-sn-glycero-3-phosphocholine + H2O = sn-glycerol 3-phosphocholine + hexadecanoate + H(+). It carries out the reaction 2-(prostaglandin E2)-sn-glycero-3-phosphoethanolamine + H2O = sn-glycero-3-phosphoethanolamine + prostaglandin E2 + H(+). The catalysed reaction is 2-[(15S)-hydroxy-(5Z,8Z,11Z,13E)-eicosatetraenoyl]-sn-glycero-3-phosphocholine + H2O = (15S)-hydroxy-(5Z,8Z,11Z,13E)-eicosatetraenoate + sn-glycerol 3-phosphocholine + H(+). It catalyses the reaction 2-[(15R)-hydroxy-(5Z,8Z,11Z,13E)-eicosatetraenoyl]-sn-glycero-3-phosphocholine + H2O = (15R)-hydroxy-(5Z,8Z,11Z,13E)-eicosatetraenoate + sn-glycerol 3-phosphocholine + H(+). The enzyme catalyses 2-(prostaglandin E2)-sn-glycero-3-phosphocholine + H2O = prostaglandin E2 + sn-glycerol 3-phosphocholine + H(+). It carries out the reaction 2-[(11R)-hydroxy-(5Z,8Z,12E,14Z)-eicosatetraenoyl]-sn-glycero-3-phosphocholine + H2O = (11R)-hydroxy-(5Z,8Z,12E,14Z)-eicosatetraenoate + sn-glycerol 3-phosphocholine + H(+). The catalysed reaction is 1-(5Z,8Z,11Z,14Z-eicosatetraenoyl)-2-O-hexadecyl-sn-glycero-3-phosphocholine + H2O = 2-O-hexadecyl-sn-glycero-3-phosphocholine + (5Z,8Z,11Z,14Z)-eicosatetraenoate + H(+). It catalyses the reaction 1-octadecanoyl-2-(5Z,8Z,11Z,14Z-eicosatetraenoyl)-sn-glycero-3-phosphocholine + glycerol = 1-(5Z,8Z,11Z,14Z-eicosatetraenoyl)-glycerol + 1-octadecanoyl-sn-glycero-3-phosphocholine. The enzyme catalyses 1-octadecanoyl-2-(9Z,12Z,15Z-octadecatrienoyl)-sn-glycero-3-phosphocholine + glycerol = 1-(9Z,12Z,15Z-octadecatrienoyl)-glycerol + 1-octadecanoyl-sn-glycero-3-phosphocholine. Its pathway is membrane lipid metabolism; glycerophospholipid metabolism. The protein operates within lipid metabolism; arachidonate metabolism. It functions in the pathway lipid metabolism; prostaglandin biosynthesis. It participates in lipid metabolism; leukotriene B4 biosynthesis. With respect to regulation, activated by cytosolic calcium, which is necessary for binding to membrane lipids. Activated by phosphorylation in response to mitogenic stimuli. Functionally, has primarily calcium-dependent phospholipase and lysophospholipase activities, with a major role in membrane lipid remodeling and biosynthesis of lipid mediators of the inflammatory response. Plays an important role in embryo implantation and parturition through its ability to trigger prostanoid production. Preferentially hydrolyzes the ester bond of the fatty acyl group attached at sn-2 position of phospholipids (phospholipase A2 activity). Selectively hydrolyzes sn-2 arachidonoyl group from membrane phospholipids, providing the precursor for eicosanoid biosynthesis via the cyclooxygenase pathway. In an alternative pathway of eicosanoid biosynthesis, hydrolyzes sn-2 fatty acyl chain of eicosanoid lysophopholipids to release free bioactive eicosanoids. Hydrolyzes the ester bond of the fatty acyl group attached at sn-1 position of phospholipids (phospholipase A1 activity) only if an ether linkage rather than an ester linkage is present at the sn-2 position. This hydrolysis is not stereospecific. Has calcium-independent phospholipase A2 and lysophospholipase activities in the presence of phosphoinositides. Has O-acyltransferase activity. Catalyzes the transfer of fatty acyl chains from phospholipids to a primary hydroxyl group of glycerol (sn-1 or sn-3), potentially contributing to monoacylglycerol synthesis. In Oryctolagus cuniculus (Rabbit), this protein is Cytosolic phospholipase A2 (PLA2G4A).